A 1405-amino-acid chain; its full sequence is MTATGKREWTPDQLAAIRARRANILVAAAAGAGKTAVLVERIIQRLTDPEDPVSLENLLVVTFTEAAAAEMRQRIGAALEAAVARDPENEALRRQLLLLNRAHISTIHSFCLWVLRTYFYRLDLDPGFRVMDPAEVDLMQLEVMDRVLEEAFAAEPDGGPVTDLADSLGGRGDANLVDLVLRVWEFSRSLPWPEAWLEQVTSSYKVTPETPLESLPWYGELRQMITLELQEAAWYLEQARQAAAAPGGPAVYLDNLENEKEQVTRLLEEVGDLPWEELNAKLAAVHFGRLKAARGEDVDPVLKERAGKLRNQARDLLYALKEDLCRDEAAVRAELERSGELVATLVGLVRRFDAALREAKGRRNLIDFSDLEHLCLRVLLDEGAGPGRLQPSDVALELRQRFAEVLVDEYQDINTVQDAILALVSRQDVAENNLFMVGDVKQSIYRFRLANPDLFLAKYRQYPEGEGGPNRRILLKANFRSRQGVVDGVNFIFRQVFSPLVGELEYDAAAALVGRAGYPENPAAATPAVEVYLQEGKVAAGTGAGGRTDLPEAVGAGKGGKISGGAGYGETLSGYGAASPGGETGAPDLEDLTALEREALLVARRIRRMVRGTPERPGPEFQVWDQEKKEYRDLTYRDIVILLRATRDRAPVFLEALKQYGIPAYADLGSGYFAATEIETILSLLRVIDNPHQDIPLAAVLRSPIVGLSAGDLARIRLAAPGEDFFTAVVKAAGAPLLPFTARESAAPSSTATGSGGALDNQPGQDPVCIAPYIEDTQEPWRDDHPGPGAAAGKAVPGKDRDLASLLREFLARLERWRTLARRQPLGDVIWQLYRETGYLEFVGGLPGGAQRQANLRALLDRARQFEGFARHGLFRFLRFIERLQQNEGDLGTARALGENEDVVRVMSIHRAKGLEFPVVIVAGLGKGFNLRDLSGDFLLHGRLGLVPLYLDAAAGIKYPTLPYLATGHRLRLEALSEELRILYVALTRAREKLILAGTVRDLPRQAENWCASLFLPGEQLPPVLTSRAGNPLDWLLPALARHPDAAAIRDLAGVGGGHLLPDPSSWQVEVVRGGELPDRGSEEPGVQVRVTAGYQGTESAGQQENPGLLCSGWPGGSRELAGAVTPVQETAGKTVAPPGSNIAEAGVEPGVSPPAGAVSPQDETGPTWLQQEVARRLAWTYPRQPLTALPVKLTVTDLKRRFDVFNEGETPLRPGENTFTRRPAFLQSHQGLTAAERGTATHLVLQHVDLSRPVTGESLAGLLQEMVEREILTPEQAAAVDIRAIVTFFAAPLGKRLLARWEQVKRELPFSLAVPAVELYPGLPAEAAAGEIILVQGIIDCLVEEEDGFLLLDFKTGRIPPDPLAAYREQVRFYTRAVETIFNRNVKEVHLYFLDGGVDFKVTS.

The UvrD-like helicase ATP-binding domain occupies R7–R482. A28–T35 lines the ATP pocket. The 364-residue stretch at P551–G914 folds into the UvrD-like helicase C-terminal domain. Disordered stretches follow at residues Q778–P797 and A1132–T1165. The span at G787 to V796 shows a compositional bias: low complexity.

The protein belongs to the helicase family. AddA subfamily. Heterodimer of AddA and AddB/RexB. It depends on Mg(2+) as a cofactor.

The catalysed reaction is Couples ATP hydrolysis with the unwinding of duplex DNA by translocating in the 3'-5' direction.. It catalyses the reaction ATP + H2O = ADP + phosphate + H(+). Its function is as follows. The heterodimer acts as both an ATP-dependent DNA helicase and an ATP-dependent, dual-direction single-stranded exonuclease. Recognizes the chi site generating a DNA molecule suitable for the initiation of homologous recombination. The AddA nuclease domain is required for chi fragment generation; this subunit has the helicase and 3' -&gt; 5' nuclease activities. The chain is ATP-dependent helicase/nuclease subunit A from Moorella thermoacetica (strain ATCC 39073 / JCM 9320).